Here is a 367-residue protein sequence, read N- to C-terminus: Peptide chain release factor 2 (367 aa).

Q251 carries the N5-methylglutamine modification.

This sequence belongs to the prokaryotic/mitochondrial release factor family. Post-translationally, methylated by PrmC. Methylation increases the termination efficiency of RF2.

The protein resides in the cytoplasm. Functionally, peptide chain release factor 2 directs the termination of translation in response to the peptide chain termination codons UGA and UAA. This Nautilia profundicola (strain ATCC BAA-1463 / DSM 18972 / AmH) protein is Peptide chain release factor 2.